A 213-amino-acid chain; its full sequence is Charged multivesicular body protein 2b (213 aa).

Position 2 is an N-acetylalanine (Ala-2). Residues 25–55 adopt a coiled-coil conformation; sequence QRAIIRDRAALEKQEKQLELEIKKMAKIGNK. The segment at 178–202 is disordered; the sequence is MAKAPSAARSLPSASTSKSTISDEE. The span at 179–194 shows a compositional bias: low complexity; it reads AKAPSAARSLPSASTS. The residue at position 199 (Ser-199) is a Phosphoserine. The short motif at 201-211 is the MIT-interacting motif element; sequence EEIERQLKALG.

Belongs to the SNF7 family. As to quaternary structure, probable core component of the endosomal sorting required for transport complex III (ESCRT-III). ESCRT-III components are thought to multimerize to form a flat lattice on the perimeter membrane of the endosome. Several assembly forms of ESCRT-III may exist that interact and act sequentially. Interacts with CHMP2A. Interacts with VPS4A. Interacts with VPS4B; the interaction is direct.

It localises to the cytoplasm. Its subcellular location is the cytosol. The protein localises to the late endosome membrane. Functionally, probable core component of the endosomal sorting required for transport complex III (ESCRT-III) which is involved in multivesicular bodies (MVBs) formation and sorting of endosomal cargo proteins into MVBs. MVBs contain intraluminal vesicles (ILVs) that are generated by invagination and scission from the limiting membrane of the endosome and mostly are delivered to lysosomes enabling degradation of membrane proteins, such as stimulated growth factor receptors, lysosomal enzymes and lipids. The MVB pathway appears to require the sequential function of ESCRT-O, -I,-II and -III complexes. ESCRT-III proteins mostly dissociate from the invaginating membrane before the ILV is released. The ESCRT machinery also functions in topologically equivalent membrane fission events, such as the terminal stages of cytokinesis and the budding of enveloped viruses (lentiviruses). ESCRT-III proteins are believed to mediate the necessary vesicle extrusion and/or membrane fission activities, possibly in conjunction with the AAA ATPase VPS4. The chain is Charged multivesicular body protein 2b (CHMP2B) from Bos taurus (Bovine).